Here is a 239-residue protein sequence, read N- to C-terminus: Cysteine-rich venom protein (239 aa).

Residues 1–18 (MIVFILLSLAAVLQQSVA) form the signal peptide. One can recognise an SCP domain in the interval 37–165 (VDMHNSFRRS…PYNYFYVCQY (129 aa)). Intrachain disulfides connect cysteine 74–cysteine 152, cysteine 91–cysteine 166, cysteine 147–cysteine 163, cysteine 185–cysteine 192, cysteine 188–cysteine 197, cysteine 210–cysteine 228, and cysteine 219–cysteine 232. The ShKT domain maps to 201-234 (CPINNVFTNCDSLLQQSSCEDSYITTNCGASCFC).

This sequence belongs to the CRISP family. In terms of tissue distribution, expressed by the venom gland.

The protein localises to the secreted. Its function is as follows. Blocks contraction of smooth muscle elicited by high potassium-induced depolarization, but does not block caffeine-stimulated contraction. May target voltage-gated calcium channels on smooth muscle. The sequence is that of Cysteine-rich venom protein from Cerberus rynchops (Dog-faced water snake).